A 649-amino-acid polypeptide reads, in one-letter code: tRNA-guanine(15) transglycosylase (649 aa).

The active-site Nucleophile is Asp-88. Residues Asp-123 and Ala-194 each contribute to the substrate site. Residues Cys-280, Cys-282, and Cys-285 each contribute to the Zn(2+) site. The PUA domain occupies 573–648 (NYRIVIDSSV…VAATLRGGIK (76 aa)).

This sequence belongs to the archaeosine tRNA-ribosyltransferase family. Requires Zn(2+) as cofactor.

The catalysed reaction is guanosine(15) in tRNA + 7-cyano-7-deazaguanine = 7-cyano-7-carbaguanosine(15) in tRNA + guanine. It participates in tRNA modification; archaeosine-tRNA biosynthesis. Exchanges the guanine residue with 7-cyano-7-deazaguanine (preQ0) at position 15 in the dihydrouridine loop (D-loop) of archaeal tRNAs. This Methanococcus maripaludis (strain C5 / ATCC BAA-1333) protein is tRNA-guanine(15) transglycosylase.